Consider the following 344-residue polypeptide: Nuclear distribution protein nudE homolog 1 (344 aa).

A self-association region spans residues 1–93 (MEDSGKTFES…MQHSEGYRQI (93 aa)). Residues 18–188 (WRDLAMTYKQ…ELAVQQKQDK (171 aa)) are a coiled coil. The interaction with PAFAH1B1 stretch occupies residues 88–156 (EGYRQISALE…ERNAFLESEL (69 aa)). Residues 167–290 (QRLKDEARDL…QSPSRTSGPA (124 aa)) are interaction with CENPF. The segment at 181 to 246 (AVQQKQDKPR…DSSTSGTPLT (66 aa)) is disordered. A Phosphoserine modification is found at S211. Phosphothreonine is present on residues T215 and T228. S239 carries the phosphoserine modification. 2 positions are modified to phosphothreonine: T243 and T246. The S-palmitoyl cysteine; by ZDHHC2, ZDHHC3 and ZDHHC7 moiety is linked to residue C274. The span at 279-289 (YDQSPSRTSGP) shows a compositional bias: polar residues. The segment at 279–337 (YDQSPSRTSGPASGRGTKNRDGVDRRPGSTSVGDKGSGKRLEFGKPASEPASPALPSAQ) is disordered. S282 bears the Phosphoserine mark. Residues 296–305 (KNRDGVDRRP) are compositionally biased toward basic and acidic residues. Position 309 is a phosphoserine (S309). Residues 324-336 (PASEPASPALPSA) show a composition bias toward low complexity.

This sequence belongs to the nudE family. Homodimer. Interacts with dynactin and PCM1. Interacts with CENPF, LIS1, CNTRL, dynein, tubulin gamma, PAFAH1B1, PCNT, SLMAP and TCP1. Interacts with ZNF365. Interacts with RAB9A; the interaction leads to RAB9A-dynein motor tethering. Interacts (via C-terminus) with MCRS1 (via C-terminus); phosphorylation of NDE1 inhibits the interaction. In terms of processing, phosphorylated in mitosis. Phosphorylation at Thr-246 is essential for the G2/M transition. As to expression, highly expressed in ovary. Also expressed in brain, heart, kidney, large intestine, liver, lung, small intestine and testis.

Its subcellular location is the cytoplasm. The protein resides in the cytoskeleton. It is found in the microtubule organizing center. The protein localises to the centrosome. It localises to the spindle. Its subcellular location is the chromosome. The protein resides in the centromere. It is found in the kinetochore. The protein localises to the cleavage furrow. It localises to the cytoplasmic vesicle membrane. Required for centrosome duplication and formation and function of the mitotic spindle. Essential for the development of the cerebral cortex. May regulate the production of neurons by controlling the orientation of the mitotic spindle during division of cortical neuronal progenitors of the proliferative ventricular zone of the brain. Orientation of the division plane perpendicular to the layers of the cortex gives rise to two proliferative neuronal progenitors whereas parallel orientation of the division plane yields one proliferative neuronal progenitor and a postmitotic neuron. A premature shift towards a neuronal fate within the progenitor population may result in an overall reduction in the final number of neurons and an increase in the number of neurons in the deeper layers of the cortex. Acts as a RAB9A/B effector that tethers RAB9-associated late endosomes to the dynein motor for their retrograde transport to the trans-Golgi network. In Mus musculus (Mouse), this protein is Nuclear distribution protein nudE homolog 1.